Consider the following 461-residue polypeptide: Photosystem II CP43 reaction center protein (461 aa).

The propeptide occupies 1–2; it reads ME. T3 is modified (N-acetylthreonine). T3 is subject to Phosphothreonine. Transmembrane regions (helical) follow at residues 57-81, 122-143, 166-188, 243-263, and 279-300; these read LFEV…PHLA, LIGP…KDKS, KSVY…RKIT, KPFA…LSYS, and WFNN…ASQA. [CaMn4O5] cluster is bound at residue E355. The chain crosses the membrane as a helical span at residues 435–459; sequence RARAAAAGFEKGIDRDTEPVLSMTP.

The protein belongs to the PsbB/PsbC family. PsbC subfamily. PSII is composed of 1 copy each of membrane proteins PsbA, PsbB, PsbC, PsbD, PsbE, PsbF, PsbH, PsbI, PsbJ, PsbK, PsbL, PsbM, PsbT, PsbX, PsbY, PsbZ, Psb30/Ycf12, at least 3 peripheral proteins of the oxygen-evolving complex and a large number of cofactors. It forms dimeric complexes. Binds multiple chlorophylls and provides some of the ligands for the Ca-4Mn-5O cluster of the oxygen-evolving complex. It may also provide a ligand for a Cl- that is required for oxygen evolution. PSII binds additional chlorophylls, carotenoids and specific lipids. is required as a cofactor.

The protein resides in the plastid. It is found in the chloroplast thylakoid membrane. In terms of biological role, one of the components of the core complex of photosystem II (PSII). It binds chlorophyll and helps catalyze the primary light-induced photochemical processes of PSII. PSII is a light-driven water:plastoquinone oxidoreductase, using light energy to abstract electrons from H(2)O, generating O(2) and a proton gradient subsequently used for ATP formation. The chain is Photosystem II CP43 reaction center protein from Psilotum nudum (Whisk fern).